We begin with the raw amino-acid sequence, 772 residues long: DNA ligase (772 aa).

Residues Asp-80–Asp-84, Ser-130–Leu-131, and Glu-160 each bind NAD(+). Residue Lys-162 is the N6-AMP-lysine intermediate of the active site. Positions 183, 220, 336, and 360 each coordinate NAD(+). The Zn(2+) site is built by Cys-454, Cys-457, Cys-473, and Cys-479. In terms of domain architecture, BRCT spans Ala-685–Gly-772.

It belongs to the NAD-dependent DNA ligase family. LigA subfamily. Mg(2+) serves as cofactor. It depends on Mn(2+) as a cofactor.

The enzyme catalyses NAD(+) + (deoxyribonucleotide)n-3'-hydroxyl + 5'-phospho-(deoxyribonucleotide)m = (deoxyribonucleotide)n+m + AMP + beta-nicotinamide D-nucleotide.. Its function is as follows. DNA ligase that catalyzes the formation of phosphodiester linkages between 5'-phosphoryl and 3'-hydroxyl groups in double-stranded DNA using NAD as a coenzyme and as the energy source for the reaction. It is essential for DNA replication and repair of damaged DNA. In Cutibacterium acnes (strain DSM 16379 / KPA171202) (Propionibacterium acnes), this protein is DNA ligase.